Reading from the N-terminus, the 214-residue chain is Rac-like GTP-binding protein 3 (214 aa).

A GTP-binding site is contributed by Gly-15–Thr-22. Positions Tyr-37–Phe-45 match the Effector region motif. GTP-binding positions include Asp-62–Gln-66 and Thr-120–Asp-123.

The protein belongs to the small GTPase superfamily. Rho family. May be palmitoylated.

It localises to the cytoplasm. The protein localises to the membrane. Inactive GDP-bound Rho GTPases reside in the cytosol, are found in a complex with Rho GDP-dissociation inhibitors (Rho GDIs), and are released from the GDI protein in order to translocate to membranes upon activation. The chain is Rac-like GTP-binding protein 3 (RAC3) from Oryza sativa subsp. japonica (Rice).